Here is a 420-residue protein sequence, read N- to C-terminus: Phospholipase A1-II 3 (420 aa).

The first 21 residues, 1-21 (MCCFLLVSVLLATTLTDVASA), serve as a signal peptide directing secretion. Asparagine 231 carries N-linked (GlcNAc...) asparagine glycosylation. Serine 240 (acyl-ester intermediate) is an active-site residue. The active-site Charge relay system is serine 240. Asparagine 294 carries N-linked (GlcNAc...) asparagine glycosylation. Catalysis depends on charge relay system residues aspartate 305 and histidine 343. Positions 367–388 (VVDRDLALVNKEVDALRDEYQV) form a coiled coil. Asparagine 403 is a glycosylation site (N-linked (GlcNAc...) asparagine).

The protein belongs to the AB hydrolase superfamily. Lipase family.

It is found in the secreted. Functionally, acylhydrolase that catalyzes the hydrolysis of phospholipids at the sn-1 position. The sequence is that of Phospholipase A1-II 3 from Oryza sativa subsp. japonica (Rice).